Consider the following 1010-residue polypeptide: Retinoblastoma-related protein 3 (1010 aa).

Residues 416-616 (TPVSTAMTTA…EKGSSMYNSL (201 aa)) form a domain A region. Positions 416–858 (TPVSTAMTTA…NEVFIPAVKS (443 aa)) are pocket. The segment at 617–727 (IVARPALSVE…PAAGGETCAE (111 aa)) is spacer. The interval 728 to 858 (TGIGVFFSKI…NEVFIPAVKS (131 aa)) is domain B. Disordered regions lie at residues 867 to 889 (ASASPKKKEEEKGPADVGPFPES) and 986 to 1010 (GSDRDAKPAADPAKTTPVKCEPSDS).

It belongs to the retinoblastoma protein (RB) family.

Its subcellular location is the nucleus. Functionally, regulator of biological processes that recruits a histone deacetylase to control gene transcription. May play a role in the entry into mitosis, negatively regulating the cell proliferation. Formation of stable complexes with geminiviridae replication-associated proteins may create a cellular environment which favors viral DNA replication. The protein is Retinoblastoma-related protein 3 (RBR3) of Zea mays (Maize).